Reading from the N-terminus, the 88-residue chain is Small ribosomal subunit protein bS20 (88 aa).

This sequence belongs to the bacterial ribosomal protein bS20 family.

Functionally, binds directly to 16S ribosomal RNA. This is Small ribosomal subunit protein bS20 from Bartonella quintana (strain Toulouse) (Rochalimaea quintana).